The sequence spans 369 residues: Tryptophan 2,3-dioxygenase 2 (369 aa).

Residues 36–40 (FIVVH) and arginine 107 contribute to the substrate site. A heme-binding site is contributed by histidine 303. Substrate is bound at residue threonine 317.

It belongs to the tryptophan 2,3-dioxygenase family. Homotetramer. Heme serves as cofactor.

It catalyses the reaction L-tryptophan + O2 = N-formyl-L-kynurenine. It participates in amino-acid degradation; L-tryptophan degradation via kynurenine pathway; L-kynurenine from L-tryptophan: step 1/2. Its function is as follows. Heme-dependent dioxygenase that catalyzes the oxidative cleavage of the L-tryptophan (L-Trp) pyrrole ring and converts L-tryptophan to N-formyl-L-kynurenine. Catalyzes the oxidative cleavage of the indole moiety. This is Tryptophan 2,3-dioxygenase 2 from Ralstonia nicotianae (strain ATCC BAA-1114 / GMI1000) (Ralstonia solanacearum).